Here is an 876-residue protein sequence, read N- to C-terminus: MLMIVQLLVFALGLAVAVPIQNYTQSPSQRDESSQWVSPHYYPTPQGGRLQDVWQEAYARAKAIVGQMTIVEKVNLTTGTGWQLDPCVGNTGSVPRFGIPNLCLQDGPLGVRFADFVTGYPSGLATGATFNKDLFLQRGQALGHEFNSKGVHIALGPAVGPLGVKARGGRNFEAFGSDPYLQGTAAAATIKGLQENNVMACVKHFIGNEQEKYRQPDDINPATNQTTKEAISANIPDRAMHALYLWPFADSVRAGVGSVMCSYNRVNNTYACENSYMMNHLLKEELGFQGFVVSDWGAQLSGVYSAISGLDMSMPGEVYGGWNTGTSFWGQNLTKAIYNETVPIERLDDMATRILAALYATNSFPTEDHLPNFSSWTTKEYGNKYYADNTTEIVKVNYNVDPSNDFTEDTALKVAEESIVLLKNENNTLPISPEKAKRLLLSGIAAGPDPIGYQCEDQSCTNGALFQGWGSGSVGSPKYQVTPFEEISYLARKNKMQFDYIRESYDLAQVTKVASDAHLSIVVVSAASGEGYITVDGNQGDRKNLTLWNNGDKLIETVAENCANTVVVVTSTGQINFEGFADHPNVTAIVWAGPLGDRSGTAIANILFGKANPSGHLPFTIAKTDDDYIPIETYSPSSGEPEDNHLVENDLLVDYRYFEEKNIEPRYAFGYGLSYNEYEVSNAKVSAAKKVDEELPEPATYLSEFSYQNAKDSKNPSDAFAPADLNRVNEYLYPYLDSNVTLKDGNYEYPDGYSTEQRTTPNQPGGGLGGNDALWEVAYNSTDKFVPQGNSTDKFVPQLYLKHPEDGKFETPIQLRGFEKVELSPGEKKTVDLRLLRRDLSVWDTTRQSWIVESGTYEALIGVAVNDIKTSVLFTI.

An N-terminal signal peptide occupies residues 1–17; the sequence is MLMIVQLLVFALGLAVA. Residues Asn22, Asn75, Asn224, and Asn267 are each glycosylated (N-linked (GlcNAc...) asparagine). Asp295 is a catalytic residue. 10 N-linked (GlcNAc...) asparagine glycosylation sites follow: Asn332, Asn339, Asn372, Asn389, Asn426, Asn544, Asn585, Asn739, Asn780, and Asn790.

This sequence belongs to the glycosyl hydrolase 3 family.

It carries out the reaction Hydrolysis of terminal, non-reducing beta-D-glucosyl residues with release of beta-D-glucose.. It functions in the pathway glycan metabolism; cellulose degradation. The sequence is that of Beta-glucosidase 1 (BGL1) from Saccharomycopsis fibuligera (Yeast).